The chain runs to 272 residues: MSDQSARPIGLFDSGIGGMTVLREVRRLLPGENLLYLADQARCPYGSRSPDELRAIAAACAAWLIARGAKLVVVACNTASAAALADLRRRFPAIPFVGMVPPVKPAASRTRSGVVGVLATPATLAGDLLHDVISRWAEGVHVIEQACPGLVEQIEEGALDSPETMALLRGYVTPLLDAGADTIVLGCTHYPLLVPQLRAIAGDDTLILDAAPAVAQRVAQIVQERGLMRNVNTLSGAITCATTGDPERFANLIHRLDLPCDRVEQAVITIDA.

Residues 13–14 (DS) and 45–46 (YG) each bind substrate. Catalysis depends on C76, which acts as the Proton donor/acceptor. A substrate-binding site is contributed by 77 to 78 (NT). Catalysis depends on C187, which acts as the Proton donor/acceptor. 188-189 (TH) serves as a coordination point for substrate.

This sequence belongs to the aspartate/glutamate racemases family.

The enzyme catalyses L-glutamate = D-glutamate. It participates in cell wall biogenesis; peptidoglycan biosynthesis. Its function is as follows. Provides the (R)-glutamate required for cell wall biosynthesis. This is Glutamate racemase from Roseiflexus sp. (strain RS-1).